A 329-amino-acid polypeptide reads, in one-letter code: DNA-directed RNA polymerase subunit alpha (329 aa).

The alpha N-terminal domain (alpha-NTD) stretch occupies residues 1–231; it reads MQNSLLKPKA…EQLAVFAQLE (231 aa). The alpha C-terminal domain (alpha-CTD) stretch occupies residues 249–329; that stretch reads FDPILLRPVD…SWPPAALEKR (81 aa).

Belongs to the RNA polymerase alpha chain family. As to quaternary structure, homodimer. The RNAP catalytic core consists of 2 alpha, 1 beta, 1 beta' and 1 omega subunit. When a sigma factor is associated with the core the holoenzyme is formed, which can initiate transcription.

It carries out the reaction RNA(n) + a ribonucleoside 5'-triphosphate = RNA(n+1) + diphosphate. In terms of biological role, DNA-dependent RNA polymerase catalyzes the transcription of DNA into RNA using the four ribonucleoside triphosphates as substrates. In Albidiferax ferrireducens (strain ATCC BAA-621 / DSM 15236 / T118) (Rhodoferax ferrireducens), this protein is DNA-directed RNA polymerase subunit alpha.